Consider the following 706-residue polypeptide: K(+)-insensitive pyrophosphate-energized proton pump (706 aa).

A run of 5 helical transmembrane segments spans residues 1–21 (MTALWVIVLCGALSIVYAIWA), 62–82 (VVIFALLAYFLGILVAIGFAI), 83–103 (GAILSGAAGFIGMNVSVRANV), 129–149 (LLVAGLALLGVTLYFIYLIHF), and 164–184 (VALGFGASLISIFARLGGGIF). Lysine 186 contributes to the substrate binding site. Mg(2+) is bound by residues aspartate 189, aspartate 193, asparagine 216, and aspartate 219. 6 helical membrane passes run 231 to 251 (LFETYAVTAVATMVLAAIFFG), 263 to 283 (TLPLAIGGICILTSIAGTFFV), 300 to 320 (IATGVLSLVGVGVVIHQLIGF), 330 to 350 (GLALFECGIVGLAVTGLIIWI), 393 to 413 (IVIIAGILITYSLAGLFGIAI), and 414 to 434 (ATTTMLALAGMIVALDAFGPV). Residue aspartate 436 participates in Mg(2+) binding. A run of 4 helical transmembrane segments spans residues 467–487 (AVTKGYAIGSAGLGALVLFAA), 516–536 (YVVVGLLFGGLLPYLFGAMGM), 585–605 (IIPSLLPVLSPIFVYFAIYAI), and 616–636 (AFSAVGAMLLGVIVTGLFVAI). Ca(2+)-binding residues include aspartate 646, aspartate 672, and aspartate 676. Substrate is bound at residue lysine 679. A helical membrane pass occupies residues 685–705 (AVNPMIKITNIVALLLLAILA).

This sequence belongs to the H(+)-translocating pyrophosphatase (TC 3.A.10) family. K(+)-insensitive subfamily. As to quaternary structure, homodimer. Mg(2+) is required as a cofactor.

The protein localises to the cell inner membrane. The enzyme catalyses diphosphate + H2O + H(+)(in) = 2 phosphate + 2 H(+)(out). Its function is as follows. Proton pump that utilizes the energy of pyrophosphate hydrolysis as the driving force for proton movement across the membrane. Generates a proton motive force. The polypeptide is K(+)-insensitive pyrophosphate-energized proton pump (Rhodopseudomonas palustris (strain ATCC BAA-98 / CGA009)).